The following is a 194-amino-acid chain: Ribosome maturation factor RimM (194 aa).

The region spanning 92 to 190 (DDGYYDHELI…ALVVTPPEGL (99 aa)) is the PRC barrel domain.

Belongs to the RimM family. Binds ribosomal protein uS19.

Its subcellular location is the cytoplasm. In terms of biological role, an accessory protein needed during the final step in the assembly of 30S ribosomal subunit, possibly for assembly of the head region. Essential for efficient processing of 16S rRNA. May be needed both before and after RbfA during the maturation of 16S rRNA. It has affinity for free ribosomal 30S subunits but not for 70S ribosomes. The polypeptide is Ribosome maturation factor RimM (Corynebacterium urealyticum (strain ATCC 43042 / DSM 7109)).